The chain runs to 170 residues: Lipoprotein signal peptidase (170 aa).

A run of 3 helical transmembrane segments spans residues 5–25, 62–82, and 89–111; these read IVGV…KAYA, SNLI…VLFV, and STIC…LRFG. Catalysis depends on residues D115 and D133. The helical transmembrane segment at 126–146 threads the bilayer; the sequence is WPAFNFADVCVTCGVICFLCL.

This sequence belongs to the peptidase A8 family.

Its subcellular location is the cell inner membrane. It catalyses the reaction Release of signal peptides from bacterial membrane prolipoproteins. Hydrolyzes -Xaa-Yaa-Zaa-|-(S,diacylglyceryl)Cys-, in which Xaa is hydrophobic (preferably Leu), and Yaa (Ala or Ser) and Zaa (Gly or Ala) have small, neutral side chains.. It functions in the pathway protein modification; lipoprotein biosynthesis (signal peptide cleavage). Its function is as follows. This protein specifically catalyzes the removal of signal peptides from prolipoproteins. The protein is Lipoprotein signal peptidase of Anaplasma marginale (strain Florida).